Consider the following 157-residue polypeptide: Ribosome maturation factor RimP (157 aa).

The protein belongs to the RimP family.

The protein resides in the cytoplasm. Required for maturation of 30S ribosomal subunits. The sequence is that of Ribosome maturation factor RimP from Geobacillus kaustophilus (strain HTA426).